The chain runs to 183 residues: Translation initiation factor IF-3 (183 aa).

The protein belongs to the IF-3 family. As to quaternary structure, monomer.

It is found in the cytoplasm. In terms of biological role, IF-3 binds to the 30S ribosomal subunit and shifts the equilibrium between 70S ribosomes and their 50S and 30S subunits in favor of the free subunits, thus enhancing the availability of 30S subunits on which protein synthesis initiation begins. This Serratia marcescens protein is Translation initiation factor IF-3.